Here is a 288-residue protein sequence, read N- to C-terminus: Heme oxygenase 1 (288 aa).

Residues 1–265 (MERPQPDSMP…KPPLNTRSQA (265 aa)) lie on the Cytoplasmic side of the membrane. Residues Lys18, His25, Tyr134, and Arg183 each coordinate heme b. A disordered region spans residues 223-260 (HDTKDQSPSRAPGLRQRASNKVQDSAPVETPRGKPPLN). Ser229 carries the post-translational modification Phosphoserine. A helical; Anchor for type IV membrane protein transmembrane segment spans residues 266 to 288 (PLLRWVLTLSFLVATVAVGLYAM).

Belongs to the heme oxygenase family. (Microbial infection) Interacts with SARS-CoV-2 ORF3A protein; the interaction promotes ORF3A-induced autophagy but is unlikely to be involved in ORF3A-mediated induction of reticulophagy. As to quaternary structure, homodimer and higher order homooligomer. Oligomerization is crucial for its stability and function in the endoplasmic reticulum. Interacts with FLVCR2; this interaction is potentiated in the presence of heme. In terms of processing, a soluble form arises by proteolytic removal of the membrane anchor. In terms of tissue distribution, expressed at higher levels in renal cancer tissue than in normal tissue (at protein level).

The protein localises to the endoplasmic reticulum membrane. The catalysed reaction is heme b + 3 reduced [NADPH--hemoprotein reductase] + 3 O2 = biliverdin IXalpha + CO + Fe(2+) + 3 oxidized [NADPH--hemoprotein reductase] + 3 H2O + H(+). In terms of biological role, catalyzes the oxidative cleavage of heme at the alpha-methene bridge carbon, released as carbon monoxide (CO), to generate biliverdin IXalpha, while releasing the central heme iron chelate as ferrous iron. Affords protection against programmed cell death and this cytoprotective effect relies on its ability to catabolize free heme and prevent it from sensitizing cells to undergo apoptosis. Its function is as follows. (Microbial infection) During SARS-COV-2 infection, promotes SARS-CoV-2 ORF3A-mediated autophagy but is unlikely to be required for ORF3A-mediated induction of reticulophagy. Catalyzes the oxidative cleavage of heme at the alpha-methene bridge carbon, released as carbon monoxide (CO), to generate biliverdin IXalpha, while releasing the central heme iron chelate as ferrous iron. The protein is Heme oxygenase 1 (HMOX1) of Homo sapiens (Human).